The chain runs to 119 residues: Large ribosomal subunit protein bL20 (119 aa).

It belongs to the bacterial ribosomal protein bL20 family.

Its function is as follows. Binds directly to 23S ribosomal RNA and is necessary for the in vitro assembly process of the 50S ribosomal subunit. It is not involved in the protein synthesizing functions of that subunit. This Colwellia psychrerythraea (strain 34H / ATCC BAA-681) (Vibrio psychroerythus) protein is Large ribosomal subunit protein bL20.